A 22-amino-acid polypeptide reads, in one-letter code: Sex pheromone inhibitor determinant (22 aa).

Positions 1-14 are excised as a propeptide; that stretch reads MSKRAMKKIIPLIT.

It is found in the secreted. Acts as a competitive inhibitor of the CAD1 pheromone. The protein is Sex pheromone inhibitor determinant (iad) of Enterococcus faecalis (strain ATCC 700802 / V583).